A 148-amino-acid polypeptide reads, in one-letter code: Small ribosomal subunit protein bS16 (148 aa).

The tract at residues 107-148 (AAARAAAGAEDRPATTPKKAKKAASADGADAPAADAPTAAGQ) is disordered. Residues 129-148 (AASADGADAPAADAPTAAGQ) show a composition bias toward low complexity.

Belongs to the bacterial ribosomal protein bS16 family.

This chain is Small ribosomal subunit protein bS16, found in Frankia alni (strain DSM 45986 / CECT 9034 / ACN14a).